The primary structure comprises 372 residues: Cytochrome b (372 aa).

4 helical membrane-spanning segments follow: residues 29–49, 73–95, 108–128, and 174–194; these read FGSM…ILSW, WFIR…LHIL, VWYS…LGYV, and FFSF…IHLI. Heme b is bound by residues histidine 79 and histidine 93. The heme b site is built by histidine 178 and histidine 192. Histidine 197 provides a ligand contact to a ubiquinone. The next 4 membrane-spanning stretches (helical) occupy residues 220–240, 284–301, 311–336, and 344–363; these read FSLK…FCIF, LGGV…VFLG, MVKT…IMGG, and DILG…IMLL.

It belongs to the cytochrome b family. As to quaternary structure, the main subunits of complex b-c1 are: cytochrome b, cytochrome c1 and the Rieske protein. Heme b is required as a cofactor.

It localises to the mitochondrion inner membrane. Its function is as follows. Component of the ubiquinol-cytochrome c reductase complex (complex III or cytochrome b-c1 complex) that is part of the mitochondrial respiratory chain. The b-c1 complex mediates electron transfer from ubiquinol to cytochrome c. Contributes to the generation of a proton gradient across the mitochondrial membrane that is then used for ATP synthesis. This chain is Cytochrome b (mt:Cyt-b), found in Leptorhynchoides thecatus (Thorny-headed worm).